A 607-amino-acid chain; its full sequence is Zinc finger CCCH domain-containing protein 66 (607 aa).

2 ANK repeats span residues 57–87 and 92–124; these read EERT…DVNR and DGAT…NPDS. Residues 161–178 show a composition bias toward acidic residues; sequence LNEVNGQEESEPEVEVEV. The tract at residues 161-193 is disordered; the sequence is LNEVNGQEESEPEVEVEVEVSPPRGSERKEYPV. 2 C3H1-type zinc fingers span residues 254 to 276 and 284 to 308; these read PCPE…HGIF and QYRT…HKPE. The tract at residues 342 to 363 is disordered; sequence ISPLPIGATTTPPLSPNGVSSP. The segment covering 349-361 has biased composition (polar residues); sequence ATTTPPLSPNGVS.

This is Zinc finger CCCH domain-containing protein 66 from Arabidopsis thaliana (Mouse-ear cress).